A 449-amino-acid polypeptide reads, in one-letter code: Tubulin alpha-1C chain (449 aa).

An MREC motif motif is present at residues 1–4 (MREC). Residue Gln11 coordinates GTP. Lys40 is modified (N6-acetyllysine). The GTP site is built by Glu71, Ser140, Gly144, Thr145, Thr179, Asn206, and Asn228. Residue Glu71 participates in Mg(2+) binding. The active site involves Glu254. Tyr282 carries the post-translational modification 3'-nitrotyrosine. A disordered region spans residues 429–449 (EKDYEEVGADSAEGDDEGDEY). The span at 431–449 (DYEEVGADSAEGDDEGDEY) shows a compositional bias: acidic residues. Position 432 is a phosphotyrosine (Tyr432). Position 439 is a phosphoserine (Ser439). 3'-nitrotyrosine is present on Tyr449.

This sequence belongs to the tubulin family. As to quaternary structure, dimer of alpha and beta chains. A typical microtubule is a hollow water-filled tube with an outer diameter of 25 nm and an inner diameter of 15 nM. Alpha-beta heterodimers associate head-to-tail to form protofilaments running lengthwise along the microtubule wall with the beta-tubulin subunit facing the microtubule plus end conferring a structural polarity. Microtubules usually have 13 protofilaments but different protofilament numbers can be found in some organisms and specialized cells. It depends on Mg(2+) as a cofactor. In terms of processing, some glutamate residues at the C-terminus are polyglycylated, resulting in polyglycine chains on the gamma-carboxyl group. Glycylation is mainly limited to tubulin incorporated into axonemes (cilia and flagella) whereas glutamylation is prevalent in neuronal cells, centrioles, axonemes, and the mitotic spindle. Both modifications can coexist on the same protein on adjacent residues, and lowering polyglycylation levels increases polyglutamylation, and reciprocally. Cilia and flagella glycylation is required for their stability and maintenance. Flagella glycylation controls sperm motility. Post-translationally, some glutamate residues at the C-terminus are polyglutamylated, resulting in polyglutamate chains on the gamma-carboxyl group. Polyglutamylation plays a key role in microtubule severing by spastin (SPAST). SPAST preferentially recognizes and acts on microtubules decorated with short polyglutamate tails: severing activity by SPAST increases as the number of glutamates per tubulin rises from one to eight, but decreases beyond this glutamylation threshold. Glutamylation is also involved in cilia motility. Acetylation of alpha chains at Lys-40 is located inside the microtubule lumen. This modification has been correlated with increased microtubule stability, intracellular transport and ciliary assembly. In terms of processing, methylation of alpha chains at Lys-40 is found in mitotic microtubules and is required for normal mitosis and cytokinesis contributing to genomic stability. Post-translationally, nitration of Tyr-449 is irreversible and interferes with normal dynein intracellular distribution. Undergoes a tyrosination/detyrosination cycle, the cyclic removal and re-addition of a C-terminal tyrosine residue by the enzymes tubulin tyrosine carboxypeptidase (MATCAP1, VASH1 or VASH2) and tubulin tyrosine ligase (TTL), respectively. In terms of processing, tyrosination promotes microtubule interaction with CAP-Gly domain-containing proteins such as CLIP1, CLIP2 and DCTN1. Tyrosination regulates the initiation of dynein-dynactin motility via interaction with DCTN1, which brings the dynein-dynactin complex into contact with microtubules. In neurons, tyrosinated tubulins mediate the initiation of retrograde vesicle transport. Post-translationally, detyrosination is involved in metaphase plate congression by guiding chromosomes during mitosis: detyrosination promotes interaction with CENPE, promoting pole-proximal transport of chromosomes toward the equator. Detyrosination increases microtubules-dependent mechanotransduction in dystrophic cardiac and skeletal muscle. In cardiomyocytes, detyrosinated microtubules are required to resist to contractile compression during contraction: detyrosination promotes association with desmin (DES) at force-generating sarcomeres, leading to buckled microtubules and mechanical resistance to contraction.

It is found in the cytoplasm. Its subcellular location is the cytoskeleton. The catalysed reaction is GTP + H2O = GDP + phosphate + H(+). Tubulin is the major constituent of microtubules, a cylinder consisting of laterally associated linear protofilaments composed of alpha- and beta-tubulin heterodimers. Microtubules grow by the addition of GTP-tubulin dimers to the microtubule end, where a stabilizing cap forms. Below the cap, tubulin dimers are in GDP-bound state, owing to GTPase activity of alpha-tubulin. The protein is Tubulin alpha-1C chain (TUBA1C) of Bos taurus (Bovine).